Reading from the N-terminus, the 186-residue chain is Nicotinamidase/pyrazinamidase (186 aa).

Asp8 (proton acceptor) is an active-site residue. Residues Asp49, His51, His57, and His71 each coordinate Fe cation. Residue Lys96 is part of the active site. Cys138 acts as the Nucleophile in catalysis.

It belongs to the isochorismatase family. In terms of assembly, monomer. Requires Mn(2+) as cofactor. Fe(2+) is required as a cofactor.

It carries out the reaction nicotinamide + H2O = nicotinate + NH4(+). The catalysed reaction is pyrazinamide + H2O = pyrazine-2-carboxylate + NH4(+). It participates in cofactor biosynthesis; nicotinate biosynthesis; nicotinate from nicotinamide: step 1/1. Its activity is regulated as follows. Is inhibited by Cu(2+), Zn(2+) and Fe(3+). Catalyzes the deamidation of nicotinamide (NAM) into nicotinate. Likely functions in the cyclical salvage pathway for production of NAD from nicotinamide. Functionally, is involved in the activation of the first-line antituberculous drug pyrazinamide (PZA) by converting it into the active form, pyrazinoic acid. The protein is Nicotinamidase/pyrazinamidase of Mycobacterium tuberculosis (strain ATCC 25618 / H37Rv).